A 228-amino-acid chain; its full sequence is Endo-1,4-beta-xylanase B (228 aa).

Positions 1-19 (MVSFTYLLAAVSAVTGAVA) are cleaved as a signal peptide. The 191-residue stretch at 37-227 (KRTSPTTGVN…SSGQATMTVS (191 aa)) folds into the GH11 domain. Residue Glu122 is the Nucleophile of the active site. Residue Glu214 is the Proton donor of the active site.

The protein belongs to the glycosyl hydrolase 11 (cellulase G) family.

Its subcellular location is the secreted. It carries out the reaction Endohydrolysis of (1-&gt;4)-beta-D-xylosidic linkages in xylans.. Its pathway is glycan degradation; xylan degradation. Inhibited by the proteinaceous endoxylanase inhibitor I from T.aestivum (TAXI-I). Its function is as follows. Endo-1,4-beta-xylanase involved in the hydrolysis of xylan, a major structural heterogeneous polysaccharide found in plant biomass representing the second most abundant polysaccharide in the biosphere, after cellulose. Plays an important role in causing fusarium head blight (FHB) on cereal crops. Induces cell death and hydrogen peroxide accumulation in infected wheat leaves. This chain is Endo-1,4-beta-xylanase B (XYLB), found in Gibberella zeae (strain ATCC MYA-4620 / CBS 123657 / FGSC 9075 / NRRL 31084 / PH-1) (Wheat head blight fungus).